The chain runs to 462 residues: Lysophospholipid acyltransferase 1 (462 aa).

9 helical membrane-spanning segments follow: residues 9–29, 52–72, 84–104, 158–178, 211–231, 263–283, 353–373, 396–416, and 431–451; these read SIGV…TIPV, FLSY…PMTI, CGII…VFYM, SLIE…GPVY, AILQ…QYPL, YFIW…FSGW, AVWH…ALMI, IMVF…AVGF, and VYYI…VVPA. His356 is an active-site residue.

It belongs to the membrane-bound acyltransferase family. Expressed in roots, rosette leaves, petals, stigma, chalazal endosperm of developing seeds and vascular bundles of siliques.

The protein resides in the endoplasmic reticulum membrane. It catalyses the reaction a 1-acyl-sn-glycero-3-phosphocholine + an acyl-CoA = a 1,2-diacyl-sn-glycero-3-phosphocholine + CoA. The catalysed reaction is 1-(9Z-octadecenoyl)-sn-glycero-3-phosphocholine + (9Z)-octadecenoyl-CoA = 1,2-di-(9Z-octadecenoyl)-sn-glycero-3-phosphocholine + CoA. It carries out the reaction 1-(9Z-octadecenoyl)-sn-glycero-3-phosphocholine + (9Z,12Z)-octadecadienoyl-CoA = 1-(9Z)-octadecenoyl-2-(9Z,12Z)-octadecadienoyl-sn-glycero-3-phosphocholine + CoA. The enzyme catalyses (9Z,12Z,15Z)-octadecatrienoyl-CoA + 1-(9Z-octadecenoyl)-sn-glycero-3-phosphocholine = 1-(9Z-octadecaenoyl)-2-(9Z,12Z,15Z-octadecatrienoyl)-sn-glycero-3-phosphocholine + CoA. It catalyses the reaction a 1-acyl-sn-glycero-3-phosphoethanolamine + an acyl-CoA = a 1,2-diacyl-sn-glycero-3-phosphoethanolamine + CoA. The catalysed reaction is a 1-acyl-sn-glycero-3-phospho-L-serine + an acyl-CoA = a 1,2-diacyl-sn-glycero-3-phospho-L-serine + CoA. Lysophospholipid acyltransferase with broad specificity. Mediates the conversion of lysophosphatidylethanolamine (1-acyl-sn-glycero-3-phosphoethanolamine or LPE) into phosphatidylethanolamine (1,2-diacyl-sn-glycero-3-phosphoethanolamine or PE) (LPEAT activity). Catalyzes the acylation of lysophosphatidylserine (1-acyl-2-hydroxy-sn-glycero-3-phospho-L-serine or LPS) into phosphatidylserine (1,2-diacyl-sn-glycero-3-phospho-L-serine or PS) (LPSAT activity). Can convert lysophosphatidylcholine (1-acyl-sn-glycero-3-phosphocholine or LPC) into phosphatidylcholine (1,2-diacyl-sn-glycero-3-phosphocholine or PC) (LPCAT activity). Exhibits preference for C18-unsaturated acyl-CoA when transferring an acyl group to lysophosphatidylcholine. Can also utilize lysophosphatidylglycerol (LPG) as substrate in vitro. Has neither activity towards lysophosphatidic acid (LPA) nor lysophosphatidylinositol (LPI). Lysophospholipid acyltransferases catalyze the reacylation step of the phospholipid remodeling pathway also known as the Lands cycle. The primary function of the Lands cycle is to provide a route for acyl remodeling to modify fatty acid (FA) composition of phospholipids derived from the Kennedy pathway. Is involved in PC acyl editing and phosphocholine headgroup exchange between PC and diacylglycerols. This processes control the majority of acyl fluxes through PC to provide polyunsaturated fatty acids for triacylglycerols synthesis in seeds. Involved with LPCAT2 in the direct incorporation of newly synthesized fatty acids exported form the chloroplast into PC through acyl editing. This is Lysophospholipid acyltransferase 1 from Arabidopsis thaliana (Mouse-ear cress).